Reading from the N-terminus, the 417-residue chain is Serine--tRNA ligase (417 aa).

Thr-232 to Glu-234 lines the L-serine pocket. Residue Arg-263–Glu-265 participates in ATP binding. Glu-286 is a binding site for L-serine. Residue Glu-350 to Ser-353 coordinates ATP. Ser-385 serves as a coordination point for L-serine.

It belongs to the class-II aminoacyl-tRNA synthetase family. Type-1 seryl-tRNA synthetase subfamily. In terms of assembly, homodimer. The tRNA molecule binds across the dimer.

The protein localises to the cytoplasm. It carries out the reaction tRNA(Ser) + L-serine + ATP = L-seryl-tRNA(Ser) + AMP + diphosphate + H(+). It catalyses the reaction tRNA(Sec) + L-serine + ATP = L-seryl-tRNA(Sec) + AMP + diphosphate + H(+). It functions in the pathway aminoacyl-tRNA biosynthesis; selenocysteinyl-tRNA(Sec) biosynthesis; L-seryl-tRNA(Sec) from L-serine and tRNA(Sec): step 1/1. Catalyzes the attachment of serine to tRNA(Ser). Is also able to aminoacylate tRNA(Sec) with serine, to form the misacylated tRNA L-seryl-tRNA(Sec), which will be further converted into selenocysteinyl-tRNA(Sec). In Sulfurihydrogenibium sp. (strain YO3AOP1), this protein is Serine--tRNA ligase.